We begin with the raw amino-acid sequence, 205 residues long: Small ribosomal subunit protein uS3 (205 aa).

The 69-residue stretch at 12–80 (VRQFLAKELA…PAQINIAEVR (69 aa)) folds into the KH type-2 domain.

It belongs to the universal ribosomal protein uS3 family. As to quaternary structure, part of the 30S ribosomal subunit. Forms a tight complex with proteins S10 and S14.

Functionally, binds the lower part of the 30S subunit head. Binds mRNA in the 70S ribosome, positioning it for translation. The polypeptide is Small ribosomal subunit protein uS3 (Buchnera aphidicola subsp. Acyrthosiphon kondoi (Acyrthosiphon kondoi symbiotic bacterium)).